We begin with the raw amino-acid sequence, 20 residues long: Non-specific lipid-transfer protein-like protein (20 aa).

It belongs to the plant LTP family.

This Jatropha curcas (Barbados nut) protein is Non-specific lipid-transfer protein-like protein.